We begin with the raw amino-acid sequence, 121 residues long: Basic phospholipase A2 homolog AppP2 (121 aa).

Intrachain disulfides connect Cys26-Cys115, Cys28-Cys44, Cys43-Cys95, Cys49-Cys121, Cys50-Cys88, Cys57-Cys81, and Cys75-Cys86. An important for membrane-damaging activities in eukaryotes and bacteria; heparin-binding region spans residues 105–117 (KKYKAYFKLKCKK).

Belongs to the phospholipase A2 family. Group II subfamily. K49 sub-subfamily. In terms of assembly, monomer. Expressed by the venom gland.

It localises to the secreted. Functionally, snake venom phospholipase A2 (PLA2) that lacks enzymatic activity. Displays edema-inducing activities. Is myotoxic. A model of myotoxic mechanism has been proposed: an apo Lys49-PLA2 is activated by the entrance of a hydrophobic molecule (e.g. fatty acid) at the hydrophobic channel of the protein leading to a reorientation of a monomer. This reorientation causes a transition between 'inactive' to 'active' states, causing alignment of C-terminal and membrane-docking sites (MDoS) side-by-side and putting the membrane-disruption sites (MDiS) in the same plane, exposed to solvent and in a symmetric position for both monomers. The MDoS region stabilizes the toxin on membrane by the interaction of charged residues with phospholipid head groups. Subsequently, the MDiS region destabilizes the membrane with penetration of hydrophobic residues. This insertion causes a disorganization of the membrane, allowing an uncontrolled influx of ions (i.e. calcium and sodium), and eventually triggering irreversible intracellular alterations and cell death. The polypeptide is Basic phospholipase A2 homolog AppP2 (Agkistrodon piscivorus piscivorus (Eastern cottonmouth)).